Here is a 436-residue protein sequence, read N- to C-terminus: MAITKVHARQIFDSRGNPTVEVEVTTDKGLFRAAVPSGASTGVHEALELRDGIKADYVGKGVLKAVENVNKTIAPALVAANLDVKNQKAVDDFLLKLDGTPNKSKLGANAILGVSLAVARAGAADKGVPLYQHLGELAGNKGPWILPVPSMNVLNGGSHAGNKLAMQEFMILPTGAKSFTEALKMGSEVYHALKSVIKAKYGQDACNVGDEGGFAPNIQDNKEGLELLNEAIAKAGYTGKVKIGMDVASSEFYKDGKYDLDFKNPNSDPSKWISGEELGQFYKEITSEYPIVSIEDPYDQDDFESWSKFRADMQDKIQIVGDDLTVTNPKRIAMAIEKKACNGLLLKVNQIGTVSESIQAALDAFNDGWGVMVSHRSGETEDTFIADLVVGLKSGQIKTGAPCRSERLAKYNQLLRIEEELGANATYAGENFRRPF.

Histidine 159 and glutamate 168 together coordinate substrate. Glutamate 211 functions as the Proton donor in the catalytic mechanism. Residues aspartate 246, glutamate 295, and aspartate 322 each contribute to the Mg(2+) site. Substrate is bound by residues glutamate 295 and aspartate 322. The active-site Proton acceptor is lysine 347. Substrate contacts are provided by residues 374 to 377 (SHRS) and lysine 398.

Belongs to the enolase family. As to quaternary structure, homodimer. Requires Mg(2+) as cofactor.

The protein localises to the cytoplasm. The catalysed reaction is (2R)-2-phosphoglycerate = phosphoenolpyruvate + H2O. It participates in carbohydrate degradation; glycolysis; pyruvate from D-glyceraldehyde 3-phosphate: step 4/5. The sequence is that of Enolase from Neocallimastix frontalis (Rumen fungus).